Here is a 170-residue protein sequence, read N- to C-terminus: Lipoprotein signal peptidase (170 aa).

Transmembrane regions (helical) follow at residues 71-91 (YFFIGIAVVVSIFLIKLILEN) and 97-116 (AIAYSLILGGAMGNLIDRVF). Catalysis depends on residues D122 and D140. Residues 131–151 (WHWPAFNLADIAIVLGALLFV) form a helical membrane-spanning segment.

It belongs to the peptidase A8 family.

The protein localises to the cell inner membrane. The catalysed reaction is Release of signal peptides from bacterial membrane prolipoproteins. Hydrolyzes -Xaa-Yaa-Zaa-|-(S,diacylglyceryl)Cys-, in which Xaa is hydrophobic (preferably Leu), and Yaa (Ala or Ser) and Zaa (Gly or Ala) have small, neutral side chains.. The protein operates within protein modification; lipoprotein biosynthesis (signal peptide cleavage). Functionally, this protein specifically catalyzes the removal of signal peptides from prolipoproteins. The chain is Lipoprotein signal peptidase from Serratia marcescens.